Here is a 273-residue protein sequence, read N- to C-terminus: 3-methyl-2-oxobutanoate hydroxymethyltransferase (273 aa).

Mg(2+)-binding residues include D49 and D88. Residues 49 to 50 (DS), D88, and K118 each bind 3-methyl-2-oxobutanoate. E120 contacts Mg(2+). The active-site Proton acceptor is the E187.

It belongs to the PanB family. Homodecamer; pentamer of dimers. Mg(2+) is required as a cofactor.

It is found in the cytoplasm. It catalyses the reaction 3-methyl-2-oxobutanoate + (6R)-5,10-methylene-5,6,7,8-tetrahydrofolate + H2O = 2-dehydropantoate + (6S)-5,6,7,8-tetrahydrofolate. The protein operates within cofactor biosynthesis; (R)-pantothenate biosynthesis; (R)-pantoate from 3-methyl-2-oxobutanoate: step 1/2. Functionally, catalyzes the reversible reaction in which hydroxymethyl group from 5,10-methylenetetrahydrofolate is transferred onto alpha-ketoisovalerate to form ketopantoate. The sequence is that of 3-methyl-2-oxobutanoate hydroxymethyltransferase from Sinorhizobium fredii (strain NBRC 101917 / NGR234).